Reading from the N-terminus, the 62-residue chain is Inner membrane protein p12 (62 aa).

A helical transmembrane segment spans residues 16 to 36; the sequence is LLIVAIVVVIMAIMLYYFWWM.

It belongs to the asfivirus inner membrane protein p12 family. Homomultimer; disulfide-linked. In terms of processing, not glycosylated.

It is found in the virion membrane. The sequence is that of Inner membrane protein p12 from African swine fever virus (isolate Pig/Kenya/KEN-50/1950) (ASFV).